Consider the following 116-residue polypeptide: Large ribosomal subunit protein bL19 (116 aa).

The protein belongs to the bacterial ribosomal protein bL19 family.

In terms of biological role, this protein is located at the 30S-50S ribosomal subunit interface and may play a role in the structure and function of the aminoacyl-tRNA binding site. The chain is Large ribosomal subunit protein bL19 from Haemophilus influenzae (strain 86-028NP).